A 189-amino-acid polypeptide reads, in one-letter code: GTP cyclohydrolase 1 (189 aa).

Residues cysteine 76, histidine 79, and cysteine 149 each contribute to the Zn(2+) site.

Belongs to the GTP cyclohydrolase I family. Toroid-shaped homodecamer, composed of two pentamers of five dimers.

The catalysed reaction is GTP + H2O = 7,8-dihydroneopterin 3'-triphosphate + formate + H(+). The protein operates within cofactor biosynthesis; 7,8-dihydroneopterin triphosphate biosynthesis; 7,8-dihydroneopterin triphosphate from GTP: step 1/1. The sequence is that of GTP cyclohydrolase 1 from Dehalococcoides mccartyi (strain ATCC BAA-2266 / KCTC 15142 / 195) (Dehalococcoides ethenogenes (strain 195)).